The primary structure comprises 249 residues: Ubiquinone biosynthesis O-methyltransferase (249 aa).

A disordered region spans residues 1 to 21; it reads MIPEVSNEASQPAAHRQENVD. Positions 52, 72, 93, and 137 each coordinate S-adenosyl-L-methionine.

This sequence belongs to the methyltransferase superfamily. UbiG/COQ3 family.

It catalyses the reaction a 3-demethylubiquinol + S-adenosyl-L-methionine = a ubiquinol + S-adenosyl-L-homocysteine + H(+). The catalysed reaction is a 3-(all-trans-polyprenyl)benzene-1,2-diol + S-adenosyl-L-methionine = a 2-methoxy-6-(all-trans-polyprenyl)phenol + S-adenosyl-L-homocysteine + H(+). It functions in the pathway cofactor biosynthesis; ubiquinone biosynthesis. Functionally, O-methyltransferase that catalyzes the 2 O-methylation steps in the ubiquinone biosynthetic pathway. In Sodalis glossinidius (strain morsitans), this protein is Ubiquinone biosynthesis O-methyltransferase.